The sequence spans 325 residues: Glutarate 2-hydroxylase (325 aa).

His-160, Asp-162, and His-292 together coordinate Fe cation.

It belongs to the glutarate hydroxylase family. In terms of assembly, homotetramer. The cofactor is Fe(2+).

The enzyme catalyses glutarate + 2-oxoglutarate + O2 = (S)-2-hydroxyglutarate + succinate + CO2. The protein operates within amino-acid degradation. In terms of biological role, acts as an alpha-ketoglutarate-dependent dioxygenase catalyzing hydroxylation of glutarate (GA) to L-2-hydroxyglutarate (L2HG). Functions in a L-lysine degradation pathway that proceeds via cadaverine, glutarate and L-2-hydroxyglutarate. In Klebsiella pneumoniae (strain 342), this protein is Glutarate 2-hydroxylase.